The primary structure comprises 533 residues: (E)-beta-farnesene synthase (533 aa).

Residues aspartate 286, aspartate 290, asparagine 430, serine 434, and glutamate 438 each coordinate Mg(2+). Positions aspartate 286 to aspartate 290 match the DDXXD motif motif.

The protein belongs to the terpene synthase family. Requires Mg(2+) as cofactor. Co(2+) serves as cofactor. The cofactor is Mn(2+).

It localises to the cytoplasm. The catalysed reaction is (2E,6E)-farnesyl diphosphate = (E)-beta-farnesene + diphosphate. Its pathway is secondary metabolite biosynthesis; terpenoid biosynthesis. Functionally, sesquiterpene cyclase catalyzing the production of beta-farnesene and alpha-bergamotene in equal amounts from farnesyl diphosphate. Involved in indirect defense by producing volatile signals attracting natural enemies of herbivores. The sequence is that of (E)-beta-farnesene synthase from Zea mays subsp. huehuetenangensis (San Antonio Huista teosinte).